Reading from the N-terminus, the 311-residue chain is Beta-lactamase (311 aa).

The segment at residues 1 to 36 (MRKPTSSLTRRSVLGAGLGLGGALALGSTTASAASA) is a signal peptide (tat-type signal). Residue Ser-86 is the Acyl-ester intermediate of the active site. Residue 252–254 (KSG) coordinates substrate.

Belongs to the class-A beta-lactamase family. Post-translationally, predicted to be exported by the Tat system. The position of the signal peptide cleavage has not been experimentally proven.

It catalyses the reaction a beta-lactam + H2O = a substituted beta-amino acid. Hydrolyzes benzylpenicillin and cloxacillin (at 10% of the rate of benzylpenicillin). The chain is Beta-lactamase (bla) from Streptomyces cellulosae.